The following is a 518-amino-acid chain: 2-isopropylmalate synthase (518 aa).

Residues 4–266 (INVFDTTLRD…DSSLNLHELK (263 aa)) enclose the Pyruvate carboxyltransferase domain. 4 residues coordinate Mn(2+): aspartate 13, histidine 201, histidine 203, and asparagine 237. The segment at 391–518 (EFLSLQVHYG…GLKRQTAVGS (128 aa)) is regulatory domain.

Belongs to the alpha-IPM synthase/homocitrate synthase family. LeuA type 1 subfamily. Homodimer. Mn(2+) is required as a cofactor.

The protein localises to the cytoplasm. It catalyses the reaction 3-methyl-2-oxobutanoate + acetyl-CoA + H2O = (2S)-2-isopropylmalate + CoA + H(+). It participates in amino-acid biosynthesis; L-leucine biosynthesis; L-leucine from 3-methyl-2-oxobutanoate: step 1/4. In terms of biological role, catalyzes the condensation of the acetyl group of acetyl-CoA with 3-methyl-2-oxobutanoate (2-ketoisovalerate) to form 3-carboxy-3-hydroxy-4-methylpentanoate (2-isopropylmalate). This is 2-isopropylmalate synthase from Bacillus velezensis (strain DSM 23117 / BGSC 10A6 / LMG 26770 / FZB42) (Bacillus amyloliquefaciens subsp. plantarum).